A 178-amino-acid polypeptide reads, in one-letter code: ATP synthase subunit delta (178 aa).

This sequence belongs to the ATPase delta chain family. As to quaternary structure, F-type ATPases have 2 components, F(1) - the catalytic core - and F(0) - the membrane proton channel. F(1) has five subunits: alpha(3), beta(3), gamma(1), delta(1), epsilon(1). F(0) has three main subunits: a(1), b(2) and c(10-14). The alpha and beta chains form an alternating ring which encloses part of the gamma chain. F(1) is attached to F(0) by a central stalk formed by the gamma and epsilon chains, while a peripheral stalk is formed by the delta and b chains.

It localises to the cell membrane. F(1)F(0) ATP synthase produces ATP from ADP in the presence of a proton or sodium gradient. F-type ATPases consist of two structural domains, F(1) containing the extramembraneous catalytic core and F(0) containing the membrane proton channel, linked together by a central stalk and a peripheral stalk. During catalysis, ATP synthesis in the catalytic domain of F(1) is coupled via a rotary mechanism of the central stalk subunits to proton translocation. Functionally, this protein is part of the stalk that links CF(0) to CF(1). It either transmits conformational changes from CF(0) to CF(1) or is implicated in proton conduction. The sequence is that of ATP synthase subunit delta from Streptococcus mutans serotype c (strain ATCC 700610 / UA159).